The primary structure comprises 394 residues: Putative 8-amino-7-oxononanoate synthase (394 aa).

Arg23 contributes to the substrate binding site. 110 to 111 (GY) provides a ligand contact to pyridoxal 5'-phosphate. His135 contacts substrate. Pyridoxal 5'-phosphate contacts are provided by residues Ser182, 207–210 (DEAH), and 238–241 (TFSK). Residue Lys241 is modified to N6-(pyridoxal phosphate)lysine. Thr355 serves as a coordination point for substrate.

This sequence belongs to the class-II pyridoxal-phosphate-dependent aminotransferase family. BioF subfamily. In terms of assembly, homodimer. Pyridoxal 5'-phosphate is required as a cofactor.

The enzyme catalyses 6-carboxyhexanoyl-[ACP] + L-alanine + H(+) = (8S)-8-amino-7-oxononanoate + holo-[ACP] + CO2. It functions in the pathway cofactor biosynthesis; biotin biosynthesis. Functionally, catalyzes the decarboxylative condensation of pimeloyl-[acyl-carrier protein] and L-alanine to produce 8-amino-7-oxononanoate (AON), [acyl-carrier protein], and carbon dioxide. This is Putative 8-amino-7-oxononanoate synthase (bioF) from Bacillus cereus (strain Q1).